Consider the following 291-residue polypeptide: ATP synthase gamma chain (291 aa).

It belongs to the ATPase gamma chain family. As to quaternary structure, F-type ATPases have 2 components, CF(1) - the catalytic core - and CF(0) - the membrane proton channel. CF(1) has five subunits: alpha(3), beta(3), gamma(1), delta(1), epsilon(1). CF(0) has three main subunits: a, b and c.

It is found in the cell inner membrane. In terms of biological role, produces ATP from ADP in the presence of a proton gradient across the membrane. The gamma chain is believed to be important in regulating ATPase activity and the flow of protons through the CF(0) complex. This chain is ATP synthase gamma chain, found in Ralstonia nicotianae (strain ATCC BAA-1114 / GMI1000) (Ralstonia solanacearum).